The following is a 664-amino-acid chain: UvrABC system protein C (664 aa).

Residues 63–141 (LRPGVYRMYD…IKRYRPPYNI (79 aa)) form the GIY-YIG domain. The UVR domain maps to 254–289 (THVQKKLVTAMEQASNDLNYELAAVYRDRLKALAFI).

Belongs to the UvrC family. In terms of assembly, interacts with UvrB in an incision complex.

It localises to the cytoplasm. Its function is as follows. The UvrABC repair system catalyzes the recognition and processing of DNA lesions. UvrC both incises the 5' and 3' sides of the lesion. The N-terminal half is responsible for the 3' incision and the C-terminal half is responsible for the 5' incision. The sequence is that of UvrABC system protein C from Zymomonas mobilis subsp. mobilis (strain ATCC 31821 / ZM4 / CP4).